Consider the following 104-residue polypeptide: Large ribosomal subunit protein eL36 (104 aa).

The protein belongs to the eukaryotic ribosomal protein eL36 family.

This chain is Large ribosomal subunit protein eL36 (RPL36), found in Tetrahymena thermophila (strain SB210).